Consider the following 265-residue polypeptide: 4-hydroxy-tetrahydrodipicolinate reductase (265 aa).

Residues 7-12 (GASGRM), Asp-33, 96-98 (GTT), and 120-123 (AANM) each bind NAD(+). Residue His-153 is the Proton donor/acceptor of the active site. His-154 is a (S)-2,3,4,5-tetrahydrodipicolinate binding site. Catalysis depends on Lys-157, which acts as the Proton donor. 163 to 164 (GT) contributes to the (S)-2,3,4,5-tetrahydrodipicolinate binding site.

The protein belongs to the DapB family.

The protein localises to the cytoplasm. It carries out the reaction (S)-2,3,4,5-tetrahydrodipicolinate + NAD(+) + H2O = (2S,4S)-4-hydroxy-2,3,4,5-tetrahydrodipicolinate + NADH + H(+). It catalyses the reaction (S)-2,3,4,5-tetrahydrodipicolinate + NADP(+) + H2O = (2S,4S)-4-hydroxy-2,3,4,5-tetrahydrodipicolinate + NADPH + H(+). The protein operates within amino-acid biosynthesis; L-lysine biosynthesis via DAP pathway; (S)-tetrahydrodipicolinate from L-aspartate: step 4/4. Catalyzes the conversion of 4-hydroxy-tetrahydrodipicolinate (HTPA) to tetrahydrodipicolinate. This Cupriavidus metallidurans (strain ATCC 43123 / DSM 2839 / NBRC 102507 / CH34) (Ralstonia metallidurans) protein is 4-hydroxy-tetrahydrodipicolinate reductase.